The primary structure comprises 235 residues: LexA repressor (235 aa).

A DNA-binding region (H-T-H motif) is located at residues F26 to T46. The tract at residues Q72–Q104 is disordered. Residues S156 and K193 each act as for autocatalytic cleavage activity in the active site.

This sequence belongs to the peptidase S24 family. Homodimer.

The enzyme catalyses Hydrolysis of Ala-|-Gly bond in repressor LexA.. Its function is as follows. Represses a number of genes involved in the response to DNA damage (SOS response), including recA and lexA. In the presence of single-stranded DNA, RecA interacts with LexA causing an autocatalytic cleavage which disrupts the DNA-binding part of LexA, leading to derepression of the SOS regulon and eventually DNA repair. In Caulobacter sp. (strain K31), this protein is LexA repressor.